Reading from the N-terminus, the 110-residue chain is UPF0060 membrane protein Rpal_4363 (110 aa).

Helical transmembrane passes span 4–24, 31–51, 59–79, and 88–108; these read LLTF…FWAW, PLWL…LTLA, AYAA…WAIE, and VIGA…PRAL.

It belongs to the UPF0060 family.

The protein resides in the cell inner membrane. The polypeptide is UPF0060 membrane protein Rpal_4363 (Rhodopseudomonas palustris (strain TIE-1)).